Here is a 192-residue protein sequence, read N- to C-terminus: Putative ripening-related protein 2 (192 aa).

A signal peptide spans 1-26 (MATTNCLLALAIAGLVLVSLPGLSRG).

It belongs to the kiwellin family.

The protein resides in the secreted. The chain is Putative ripening-related protein 2 from Oryza sativa subsp. japonica (Rice).